We begin with the raw amino-acid sequence, 233 residues long: Charged multivesicular body protein 4c (233 aa).

Disordered regions lie at residues 1-24 (MSKL…SPQE) and 173-233 (QEEL…AWAT). Residues 1-153 (MSKLGKFFKG…EISEAFSQRV (153 aa)) form an intramolecular interaction with C-terminus region. The stretch at 125–183 (LNKIDDLMQEITEQQDIAQEISEAFSQRVGFGDDFDEDELMAELEELEQEELNKKMTNI) forms a coiled coil. An intramolecular interaction with N-terminus region spans residues 154 to 233 (GFGDDFDEDE…DIKQLAAWAT (80 aa)). Residues 204-216 (SSTARRSRAASSQ) show a composition bias toward low complexity. S210 carries the phosphoserine; by AURKB modification.

This sequence belongs to the SNF7 family. In terms of assembly, probable core component of the endosomal sorting required for transport complex III (ESCRT-III). ESCRT-III components are thought to multimerize to form a flat lattice on the perimeter membrane of the endosome. Several assembly forms of ESCRT-III may exist that interact and act sequentially. Self-associates. Interacts with CHMP2A. Interacts with CHMP4A. Interacts with CHMP4B. Interacts with CHMP6. Interacts with VPS4A. Interacts with PDCD6IP; the interaction is direct. Phosphorylated at Ser-210 by AURKB during cytokinesis: together with ZFYVE19/ANCHR, phosphorylated CHMP4C retains abscission-competent VPS4 (VPS4A and/or VPS4B) at the midbody ring until abscission checkpoint signaling is terminated at late cytokinesis. Expressed in heart, spleen and kidney.

It is found in the cytoplasm. It localises to the cytosol. The protein localises to the late endosome membrane. The protein resides in the midbody. Its subcellular location is the midbody ring. Functionally, probable core component of the endosomal sorting required for transport complex III (ESCRT-III) which is involved in multivesicular bodies (MVBs) formation and sorting of endosomal cargo proteins into MVBs. MVBs contain intraluminal vesicles (ILVs) that are generated by invagination and scission from the limiting membrane of the endosome and mostly are delivered to lysosomes enabling degradation of membrane proteins, such as stimulated growth factor receptors, lysosomal enzymes and lipids. The MVB pathway appears to require the sequential function of ESCRT-O, -I,-II and -III complexes. ESCRT-III proteins mostly dissociate from the invaginating membrane before the ILV is released. The ESCRT machinery also functions in topologically equivalent membrane fission events, such as the terminal stages of cytokinesis and the budding of enveloped viruses (HIV-1 and other lentiviruses). Key component of the cytokinesis checkpoint, a process required to delay abscission to prevent both premature resolution of intercellular chromosome bridges and accumulation of DNA damage: upon phosphorylation by AURKB, together with ZFYVE19/ANCHR, retains abscission-competent VPS4 (VPS4A and/or VPS4B) at the midbody ring until abscission checkpoint signaling is terminated at late cytokinesis. Deactivation of AURKB results in dephosphorylation of CHMP4C followed by its dissociation from ANCHR and VPS4 and subsequent abscission. ESCRT-III proteins are believed to mediate the necessary vesicle extrusion and/or membrane fission activities, possibly in conjunction with the AAA ATPase VPS4. Involved in HIV-1 p6- and p9-dependent virus release. CHMP4A/B/C are required for the exosomal release of SDCBP, CD63 and syndecan. The sequence is that of Charged multivesicular body protein 4c (CHMP4C) from Homo sapiens (Human).